Consider the following 497-residue polypeptide: Serine/threonine protein phosphatase 2A 57 kDa regulatory subunit B' epsilon isoform (497 aa).

Positions 12 to 71 (KFNKSDQHHQDNNNNNNNTSTNTVVRGSRTTTPAPSSVSNGESQTTAQSPSQTPNHPMFT) are disordered. Residues 23 to 34 (NNNNNNNTSTNT) are compositionally biased toward low complexity. Residues 35-71 (VVRGSRTTTPAPSSVSNGESQTTAQSPSQTPNHPMFT) show a composition bias toward polar residues.

This sequence belongs to the phosphatase 2A regulatory subunit B56 family. PP2A consists of a common heteromeric enzyme, composed of a catalytic subunit (subunits C), a constant regulatory subunit (subunit A), and a variety of regulatory subunits such as subunits B (the R2/B/PR55/B55, R3/B''/PR72/PR130/PR59 and R5/B'/B56 families). In terms of tissue distribution, expressed ubiquitously.

The protein localises to the cytoplasm. Functionally, the B regulatory subunit may modulate substrate selectivity and catalytic activity, and may also direct the localization of the catalytic enzyme to a particular subcellular compartment. The polypeptide is Serine/threonine protein phosphatase 2A 57 kDa regulatory subunit B' epsilon isoform (B'EPSILON) (Arabidopsis thaliana (Mouse-ear cress)).